We begin with the raw amino-acid sequence, 293 residues long: Probable metal transport system membrane protein CPn_0543/CP_0209/CPj0543/CpB0565 (293 aa).

The next 7 helical transmembrane spans lie at 12-32 (LLILLPTFLAALGASVAGGVM), 41-61 (IVSISGSISHAILGGIGLTLW), 68-88 (LSFFPMYGAIVGAIFLALCIG), 101-121 (LIAMIWSVGMAIGIIFISRLP), 140-160 (PSDLYSLGIFDLLVLGIVVLC), 183-203 (LWYFLLLVLTAITIVMLIYVM), and 253-273 (FPVGPTISLLMGLGYTASLCV).

Belongs to the ABC-3 integral membrane protein family.

It is found in the cell inner membrane. Functionally, part of an ATP-driven transport system CPn_0541/CPn_0542/CPn_0543 for a metal. This Chlamydia pneumoniae (Chlamydophila pneumoniae) protein is Probable metal transport system membrane protein CPn_0543/CP_0209/CPj0543/CpB0565.